Here is an 83-residue protein sequence, read N- to C-terminus: Small ribosomal subunit protein uS17 (83 aa).

The protein belongs to the universal ribosomal protein uS17 family. As to quaternary structure, part of the 30S ribosomal subunit.

Functionally, one of the primary rRNA binding proteins, it binds specifically to the 5'-end of 16S ribosomal RNA. This is Small ribosomal subunit protein uS17 from Pseudoalteromonas atlantica (strain T6c / ATCC BAA-1087).